Reading from the N-terminus, the 1331-residue chain is Beta-mannanase/endoglucanase A (1331 aa).

Positions 1–41 are cleaved as a signal peptide; sequence MRLKTKIRKKWLSVLCTVVFLLNILFIANVTILPKVGAATS. Positions 42–325 are catalytic (mannanase); sequence NDGVVKIDTS…YKTNAIGTSS (284 aa). The Proton donor role is filled by Glu162. Glu257 serves as the catalytic Nucleophile. 3 disordered regions span residues 319–363, 515–566, and 717–780; these read NAIG…TPAT, PSGA…TPAT, and EPSG…PLPT. Residues 323–335 are compositionally biased toward low complexity; it reads TSSTPTPTSTVTP. The region spanning 363-516 is the CBM3 1 domain; that stretch reads TSGQIKVLYA…GVLVWGQEPS (154 aa). 2 stretches are compositionally biased toward pro residues: residues 521–541 and 551–561; these read APAP…PTVT and TPTPTPTPTPV. The CBM3 2 domain occupies 566–719; that stretch reads TGGQIKVLYA…GVLVWGQEPS (154 aa). A compositionally biased stretch (low complexity) spans 721–735; sequence TTPSPTSTPTVTVTP. Composition is skewed to pro residues over residues 736-756 and 766-780; these read TPTP…PTVT and TPTP…PLPT. Positions 781 to 1331 are catalytic (endoglucanase); the sequence is ISPSPSVVEI…RNLVFMRALV (551 aa).

It in the N-terminal section; belongs to the glycosyl hydrolase 5 (cellulase A) family. The protein in the C-terminal section; belongs to the glycosyl hydrolase 44 (cellulase J) family.

It catalyses the reaction Random hydrolysis of (1-&gt;4)-beta-D-mannosidic linkages in mannans, galactomannans and glucomannans.. It carries out the reaction Endohydrolysis of (1-&gt;4)-beta-D-glucosidic linkages in cellulose, lichenin and cereal beta-D-glucans.. Degradation of hemicelluloses, the second most abundant polysaccharides in nature. Contains two catalytic domains with mannanase and endoglucanase activities. The chain is Beta-mannanase/endoglucanase A (manA) from Caldicellulosiruptor saccharolyticus (Caldocellum saccharolyticum).